A 164-amino-acid polypeptide reads, in one-letter code: UPF0305 protein MTH_812 (164 aa).

The protein belongs to the UPF0305 family.

In Methanothermobacter thermautotrophicus (strain ATCC 29096 / DSM 1053 / JCM 10044 / NBRC 100330 / Delta H) (Methanobacterium thermoautotrophicum), this protein is UPF0305 protein MTH_812.